The sequence spans 362 residues: Notoamide biosynthesis cluster protein J' (362 aa).

An N-terminal signal peptide occupies residues 1 to 22; the sequence is MRNMATMLHLLTLILLTSPAST. N-linked (GlcNAc...) asparagine glycosylation is found at Asn-157, Asn-190, Asn-280, and Asn-338.

Part of the gene cluster that mediates the biosynthesis of notoamide, a fungal indole alkaloid that belongs to a family of natural products containing a characteristic bicyclo[2.2.2]diazaoctane core. The first step of notoamide biosynthesis involves coupling of L-proline and L-tryptophan by the bimodular NRPS notE', to produce cyclo-L-tryptophan-L-proline called brevianamide F. The reverse prenyltransferase notF' then acts as a deoxybrevianamide E synthase and converts brevianamide F to deoxybrevianamide E via reverse prenylation at C-2 of the indole ring leading to the bicyclo[2.2.2]diazaoctane core. Deoxybrevianamide E is further hydroxylated at C-6 of the indole ring, likely catalyzed by the cytochrome P450 monooxygenase notG', to yield 6-hydroxy-deoxybrevianamide E. 6-hydroxy-deoxybrevianamide E is a specific substrate of the prenyltransferase notC' for normal prenylation at C-7 to produce 6-hydroxy-7-prenyl-deoxybrevianamide, also called notoamide S. As the proposed pivotal branching point in notoamide biosynthesis, notoamide S can be diverted to notoamide E through an oxidative pyran ring closure putatively catalyzed by either notH' cytochrome P450 monooxygenase or the notD' FAD-linked oxidoreductase. This step would be followed by an indole 2,3-epoxidation-initiated pinacol-like rearrangement catalyzed by the notB' FAD-dependent monooxygenase leading to the formation of notoamide C and notoamide D. On the other hand notoamide S is converted to notoamide T by notH' (or notD'), a bifunctional oxidase that also functions as the intramolecular Diels-Alderase responsible for generation of (-)-notoamide T. To generate antipodal (+)-notoaminide T, notH (or notD) in Aspergillus strain MF297-2 is expected to catalyze a Diels-Alder reaction leading to the opposite stereochemistry. The remaining oxidoreductase notD' (or notH') likely catalyzes the oxidative pyran ring formation to yield (-)-stephacidin A. The FAD-dependent monooxygenase notI' is highly similar to notB' and is predicted to catalyze a similar conversion from (-)-stephacidin A to (+)-notoamide B via the 2,3-epoxidation of (-)-stephacidin A followed by a pinacol-type rearrangement. Finally, it remains unclear which enzyme could be responsible for the final hydroxylation steps leading to notoamide A and sclerotiamide. The function of notJ' in the notoamide biosynthesis has not been determined yet. This is Notoamide biosynthesis cluster protein J' from Aspergillus versicolor.